The primary structure comprises 337 residues: Cell-surface associated glycoprotein DFI1 (337 aa).

The Cytoplasmic portion of the chain corresponds to 1–21 (MEKLSINNNNNNRRYQSRRFD). The chain crosses the membrane as a helical span at residues 22-42 (GITIIRIVVLVFIVTVSTYFV). Topologically, residues 43 to 269 (NSYTCNQPHH…NGGGLSHTNR (227 aa)) are extracellular. N-linked (GlcNAc...) asparagine glycosylation is found at Asn-53, Asn-65, Asn-87, and Asn-100. 2 stretches are compositionally biased toward low complexity: residues 124 to 220 (SSTF…TSAS) and 241 to 259 (SVIS…KNND). Disordered stretches follow at residues 124-224 (SSTF…QHVT) and 241-265 (SVIS…GGLS). A helical transmembrane segment spans residues 270 to 290 (IVVGVVVGVGGSILIGLLAVL). The Glycophorin A motif lies at 273 to 277 (GVVVG). At 291–337 (FYLRKRNNRDYEGGWTFWRKNEKLGSDEFFNGELGVRDRNINQGSNF) the chain is on the cytoplasmic side. A Calmodulin-binding motif is present at residues 301-314 (YEGGWTFWRKNEKL).

This sequence belongs to the MID2 like cell wall stress sensor family. In terms of processing, cross-linked to the carbohydrate polymers of the cell wall. Post-translationally, O-glycosylated by MNT1 and MNT2. Also N-glycosylated.

Its subcellular location is the cell membrane. The protein localises to the cell septum. It localises to the secreted. The protein resides in the cell wall. Functionally, cell-surface associated glycoprotein that acts as a plasma membrane receptor-type protein which senses the presence of matrix. Binds to calmodulin in response to environmental conditions and initiates a signaling cascade that activates CEK1, thus promoting invasive filamentation. Involved in the maintenance of the cell wall. The protein is Cell-surface associated glycoprotein DFI1 of Candida albicans (strain SC5314 / ATCC MYA-2876) (Yeast).